Reading from the N-terminus, the 122-residue chain is uncharacterized protein (122 aa).

3 helical membrane-spanning segments follow: residues 33-53, 58-78, and 97-117; these read ALGL…LTIP, VLGV…LLRW, and PGYL…LVVA.

This sequence to E.coli YidH.

The protein resides in the cell membrane. This is an uncharacterized protein from Mycobacterium tuberculosis (strain CDC 1551 / Oshkosh).